The following is a 707-amino-acid chain: Ribosomal RNA large subunit methyltransferase K/L (707 aa).

A THUMP domain is found at 43–154 (QIYRCCLWSR…KDKAILGVDM (112 aa)).

It belongs to the methyltransferase superfamily. RlmKL family.

The protein localises to the cytoplasm. It catalyses the reaction guanosine(2445) in 23S rRNA + S-adenosyl-L-methionine = N(2)-methylguanosine(2445) in 23S rRNA + S-adenosyl-L-homocysteine + H(+). The enzyme catalyses guanosine(2069) in 23S rRNA + S-adenosyl-L-methionine = N(2)-methylguanosine(2069) in 23S rRNA + S-adenosyl-L-homocysteine + H(+). In terms of biological role, specifically methylates the guanine in position 2445 (m2G2445) and the guanine in position 2069 (m7G2069) of 23S rRNA. The chain is Ribosomal RNA large subunit methyltransferase K/L from Vibrio campbellii (strain ATCC BAA-1116).